The chain runs to 205 residues: Fibrillarin-like rRNA/tRNA 2'-O-methyltransferase (205 aa).

Residues 60 to 61 (ST), 76 to 77 (EF), 101 to 102 (DA), and 121 to 124 (DIAQ) each bind S-adenosyl-L-methionine.

Belongs to the methyltransferase superfamily. Fibrillarin family. As to quaternary structure, interacts with nop5. Component of box C/D small ribonucleoprotein (sRNP) particles that contain rpl7ae, FlpA and nop5, plus a guide RNA.

Involved in pre-rRNA and tRNA processing. Utilizes the methyl donor S-adenosyl-L-methionine to catalyze the site-specific 2'-hydroxyl methylation of ribose moieties in rRNA and tRNA. Site specificity is provided by a guide RNA that base pairs with the substrate. Methylation occurs at a characteristic distance from the sequence involved in base pairing with the guide RNA. The protein is Fibrillarin-like rRNA/tRNA 2'-O-methyltransferase of Methanospirillum hungatei JF-1 (strain ATCC 27890 / DSM 864 / NBRC 100397 / JF-1).